The sequence spans 617 residues: Phenylalanine--tRNA ligase beta subunit (617 aa).

Residues 306-383 (IQEKQINAQV…IGYGYDNLKK (78 aa)) enclose the B5 domain. Mg(2+) contacts are provided by D361, D367, E370, and D371.

The protein belongs to the phenylalanyl-tRNA synthetase beta subunit family. Type 2 subfamily. As to quaternary structure, tetramer of two alpha and two beta subunits. Requires Mg(2+) as cofactor.

The protein resides in the cytoplasm. It carries out the reaction tRNA(Phe) + L-phenylalanine + ATP = L-phenylalanyl-tRNA(Phe) + AMP + diphosphate + H(+). The protein is Phenylalanine--tRNA ligase beta subunit (phesB) of Dictyostelium discoideum (Social amoeba).